We begin with the raw amino-acid sequence, 890 residues long: MATQIDASSEAAAATAAAQHTPMMQQYLRIKSEHPDTLVFYRMGDFYELFFEDAEKAARLLDLTLTQRGASAGTPIKMAGVPHHAVEQYLAKLVKFGESAAICEQIGDPATSKGPVERKVVRVVTPGTLTDAALLSDKSDVFLLALCVGHNKRGVASNIGLAWLNLASGALRLAELAPDQLGAALERIRPAEILAADGTIESVPAGMGAITRVPAWHFDIASGTQRLCDQLEVASLDGFGAQALTSANGAAGALLIYAAATQGQQLRHVRSLKVENESEYIGLDPSTRRNLELTETLRGTESPTLYSLLDTCCTAMGSRLLRHWLHHPPRASVAAQARHQAIGALLDAPPNAGLDSLRSALRQIADVERITGRLALLSARPRDLSSLRDTFAALPALRERVAEIASNAAALGRLEAALEPPPGCLDLLTRAIAAEPAAMVRDGGVIARGYDAELDELRDISENCGQFLIDLETRERARTGISNLRVEYNKVHGFYIEVTRGQTDKVPDDYRRRQTLKNAERYITPELKTFEDKALSAQERALARERALYDGVLQALLPHIEGCQRVASGLAELDLLAAFAERARTLDWVAPEFTDEIGIEIDQGRHPVVEAQVEQFIANDCALNPERKLLLITGPNMGGKSTFMRQTALIALMAYVGSYVPAKAARFGPIDRIFTRIGAADDLAGGRSTFMVEMTEAAAILNDATPHSLVLMDEIGRGTSTFDGLALAWAIARHLLSHNRCYTLFATHYFELTQLPAEFPQAANVHLSAVEHGHGIVFLHAVEEGPANQSYGLQVAQLAGVPAPVIRAARKHLAHLEQQSAAQATPQLDLFAAPPVVDEPECNEPPAATPHPALERLLELDPDDLKPRDALDLLYELHTLARSGPADAQR.

ATP is bound at residue 634 to 641; the sequence is GPNMGGKS.

It belongs to the DNA mismatch repair MutS family.

In terms of biological role, this protein is involved in the repair of mismatches in DNA. It is possible that it carries out the mismatch recognition step. This protein has a weak ATPase activity. The protein is DNA mismatch repair protein MutS of Burkholderia pseudomallei (strain K96243).